Reading from the N-terminus, the 735-residue chain is Ion-translocating oxidoreductase complex subunit C (735 aa).

2 4Fe-4S ferredoxin-type domains span residues 368 to 397 and 407 to 436; these read MGAPQEEKSCIRCSACADACPADLLPQQLY and KATAHHIADCIECGACAWVCPSNIPLVQYF. Residues C377, C380, C383, C387, C416, C419, C422, and C426 each coordinate [4Fe-4S] cluster. Residues 538 to 715 are disordered; it reads KQAAHPMADS…PADPRKAAVA (178 aa). Residues 556-565 are compositionally biased toward low complexity; that stretch reads KAAVEAAIAR.

Belongs to the 4Fe4S bacterial-type ferredoxin family. RnfC subfamily. As to quaternary structure, the complex is composed of six subunits: RsxA, RsxB, RsxC, RsxD, RsxE and RsxG. It depends on [4Fe-4S] cluster as a cofactor.

It localises to the cell inner membrane. Its function is as follows. Part of a membrane-bound complex that couples electron transfer with translocation of ions across the membrane. Required to maintain the reduced state of SoxR. The chain is Ion-translocating oxidoreductase complex subunit C from Salmonella typhimurium (strain LT2 / SGSC1412 / ATCC 700720).